The following is a 259-amino-acid chain: Gene 2 protein (259 aa).

2 stretches are compositionally biased toward basic and acidic residues: residues 1–12 and 21–36; these read MPPTELEKKRGE and QKQHAPTDEKREAKRK. The disordered stretch occupies residues 1–36; that stretch reads MPPTELEKKRGEYNQIAIDAQKQHAPTDEKREAKRK.

This is Gene 2 protein (2) from Mycobacterium (Mycobacteriophage L5).